A 283-amino-acid chain; its full sequence is Protein/nucleic acid deglycase HchA (283 aa).

Zn(2+)-binding residues include His-86, Glu-91, and His-123. Cys-185 functions as the Nucleophile in the catalytic mechanism.

This sequence belongs to the peptidase C56 family. HchA subfamily. In terms of assembly, homodimer.

It localises to the cytoplasm. It carries out the reaction N(omega)-(1-hydroxy-2-oxopropyl)-L-arginyl-[protein] + H2O = lactate + L-arginyl-[protein] + H(+). The catalysed reaction is N(6)-(1-hydroxy-2-oxopropyl)-L-lysyl-[protein] + H2O = lactate + L-lysyl-[protein] + H(+). It catalyses the reaction S-(1-hydroxy-2-oxopropyl)-L-cysteinyl-[protein] + H2O = lactate + L-cysteinyl-[protein] + H(+). The enzyme catalyses N(omega)-(1-hydroxy-2-oxoethyl)-L-arginyl-[protein] + H2O = L-arginyl-[protein] + glycolate + H(+). It carries out the reaction N(6)-(1-hydroxy-2-oxoethyl)-L-lysyl-[protein] + H2O = glycolate + L-lysyl-[protein] + H(+). The catalysed reaction is S-(1-hydroxy-2-oxoethyl)-L-cysteinyl-[protein] + H2O = glycolate + L-cysteinyl-[protein] + H(+). It catalyses the reaction N(2)-(1-hydroxy-2-oxopropyl)-dGTP + H2O = lactate + dGTP + H(+). The enzyme catalyses N(2)-(1-hydroxy-2-oxopropyl)-GTP + H2O = lactate + GTP + H(+). It carries out the reaction N(2)-(1-hydroxy-2-oxopropyl)-GDP + H2O = lactate + GDP + H(+). The catalysed reaction is N(2)-(1-hydroxy-2-oxopropyl)-GMP + H2O = lactate + GMP + H(+). It catalyses the reaction N(2)-(1-hydroxy-2-oxoethyl)-dGTP + H2O = dGTP + glycolate + H(+). The enzyme catalyses N(2)-(1-hydroxy-2-oxoethyl)-GTP + H2O = glycolate + GTP + H(+). It carries out the reaction N(2)-(1-hydroxy-2-oxoethyl)-GDP + H2O = glycolate + GDP + H(+). The catalysed reaction is N(2)-(1-hydroxy-2-oxoethyl)-GMP + H2O = glycolate + GMP + H(+). It catalyses the reaction an N(2)-(1-hydroxy-2-oxopropyl)-guanosine in RNA + H2O = a guanosine in RNA + lactate + H(+). The enzyme catalyses an N(2)-(1-hydroxy-2-oxopropyl)-2'-deoxyguanosine in DNA + H2O = a 2'-deoxyguanosine in DNA + lactate + H(+). It carries out the reaction an N(2)-(1-hydroxy-2-oxoethyl)-guanosine in RNA + H2O = a guanosine in RNA + glycolate + H(+). The catalysed reaction is an N(2)-(1-hydroxy-2-oxoethyl)-2'-deoxyguanosine in DNA + H2O = a 2'-deoxyguanosine in DNA + glycolate + H(+). In terms of biological role, protein and nucleotide deglycase that catalyzes the deglycation of the Maillard adducts formed between amino groups of proteins or nucleotides and reactive carbonyl groups of glyoxals. Thus, functions as a protein deglycase that repairs methylglyoxal- and glyoxal-glycated proteins, and releases repaired proteins and lactate or glycolate, respectively. Deglycates cysteine, arginine and lysine residues in proteins, and thus reactivates these proteins by reversing glycation by glyoxals. Acts on early glycation intermediates (hemithioacetals and aminocarbinols), preventing the formation of Schiff bases and advanced glycation endproducts (AGE). Also functions as a nucleotide deglycase able to repair glycated guanine in the free nucleotide pool (GTP, GDP, GMP, dGTP) and in DNA and RNA. Is thus involved in a major nucleotide repair system named guanine glycation repair (GG repair), dedicated to reversing methylglyoxal and glyoxal damage via nucleotide sanitization and direct nucleic acid repair. Plays an important role in protecting cells from carbonyl stress. This is Protein/nucleic acid deglycase HchA from Escherichia coli O139:H28 (strain E24377A / ETEC).